The sequence spans 150 residues: SsrA-binding protein (150 aa).

It belongs to the SmpB family.

It localises to the cytoplasm. Required for rescue of stalled ribosomes mediated by trans-translation. Binds to transfer-messenger RNA (tmRNA), required for stable association of tmRNA with ribosomes. tmRNA and SmpB together mimic tRNA shape, replacing the anticodon stem-loop with SmpB. tmRNA is encoded by the ssrA gene; the 2 termini fold to resemble tRNA(Ala) and it encodes a 'tag peptide', a short internal open reading frame. During trans-translation Ala-aminoacylated tmRNA acts like a tRNA, entering the A-site of stalled ribosomes, displacing the stalled mRNA. The ribosome then switches to translate the ORF on the tmRNA; the nascent peptide is terminated with the 'tag peptide' encoded by the tmRNA and targeted for degradation. The ribosome is freed to recommence translation, which seems to be the essential function of trans-translation. This Magnetococcus marinus (strain ATCC BAA-1437 / JCM 17883 / MC-1) protein is SsrA-binding protein.